We begin with the raw amino-acid sequence, 309 residues long: Pyridoxal 5'-phosphate synthase subunit PDX1.3 (309 aa).

An N-acetylmethionine modification is found at methionine 1. Residue aspartate 40 participates in D-ribose 5-phosphate binding. The Schiff-base intermediate with D-ribose 5-phosphate role is filled by lysine 97. Glycine 169 is a binding site for D-ribose 5-phosphate. Arginine 181 is a D-glyceraldehyde 3-phosphate binding site. Residues glycine 230 and 251–252 contribute to the D-ribose 5-phosphate site; that span reads GS.

The protein belongs to the PdxS/SNZ family. In terms of assembly, homodimer or heterodimer with PDX1.1 or PDX1.2. Interacts with PDX2. Expressed in cotyledons, rapidly dividing root stele tissues, stems, leaves, flowers, mature pollen, and siliques.

The protein resides in the cytoplasm. Its subcellular location is the cell membrane. It localises to the membrane. The enzyme catalyses aldehydo-D-ribose 5-phosphate + D-glyceraldehyde 3-phosphate + L-glutamine = pyridoxal 5'-phosphate + L-glutamate + phosphate + 3 H2O + H(+). It participates in cofactor biosynthesis; pyridoxal 5'-phosphate biosynthesis. Its function is as follows. Catalyzes the formation of pyridoxal 5'-phosphate from ribose 5-phosphate (RBP), glyceraldehyde 3-phosphate (G3P) and ammonia. The ammonia is provided by PDX2. Can also use ribulose 5-phosphate and dihydroxyacetone phosphate as substrates, resulting from enzyme-catalyzed isomerization of RBP and G3P, respectively. Also plays an indirect role in resistance to singlet oxygen-generating photosensitizers. In Arabidopsis thaliana (Mouse-ear cress), this protein is Pyridoxal 5'-phosphate synthase subunit PDX1.3 (PDX13).